A 77-amino-acid polypeptide reads, in one-letter code: Small ribosomal subunit protein uS4 (77 aa).

The disordered stretch occupies residues 45 to 77 (PFGGGRPGRVKRKNQKAAAKKASGGDGDEEDEE). A compositionally biased stretch (basic residues) spans 52–63 (GRVKRKNQKAAA).

Belongs to the universal ribosomal protein uS4 family.

The sequence is that of Small ribosomal subunit protein uS4 (RPS9) from Nicotiana tabacum (Common tobacco).